A 575-amino-acid polypeptide reads, in one-letter code: Proline--tRNA ligase (575 aa).

Belongs to the class-II aminoacyl-tRNA synthetase family. ProS type 1 subfamily. Homodimer.

It is found in the cytoplasm. The enzyme catalyses tRNA(Pro) + L-proline + ATP = L-prolyl-tRNA(Pro) + AMP + diphosphate. In terms of biological role, catalyzes the attachment of proline to tRNA(Pro) in a two-step reaction: proline is first activated by ATP to form Pro-AMP and then transferred to the acceptor end of tRNA(Pro). As ProRS can inadvertently accommodate and process non-cognate amino acids such as alanine and cysteine, to avoid such errors it has two additional distinct editing activities against alanine. One activity is designated as 'pretransfer' editing and involves the tRNA(Pro)-independent hydrolysis of activated Ala-AMP. The other activity is designated 'posttransfer' editing and involves deacylation of mischarged Ala-tRNA(Pro). The misacylated Cys-tRNA(Pro) is not edited by ProRS. The protein is Proline--tRNA ligase of Desulfitobacterium hafniense (strain DSM 10664 / DCB-2).